A 54-amino-acid chain; its full sequence is Large ribosomal subunit protein bL32c (54 aa).

The segment at 1–20 (MAVPKKKMSKSRRNSRKSNW) is disordered.

It belongs to the bacterial ribosomal protein bL32 family.

The protein localises to the plastid. Its subcellular location is the chloroplast. The polypeptide is Large ribosomal subunit protein bL32c (rpl32) (Euglena gracilis).